A 117-amino-acid polypeptide reads, in one-letter code: Large ribosomal subunit protein bL20 (117 aa).

Belongs to the bacterial ribosomal protein bL20 family.

Binds directly to 23S ribosomal RNA and is necessary for the in vitro assembly process of the 50S ribosomal subunit. It is not involved in the protein synthesizing functions of that subunit. The chain is Large ribosomal subunit protein bL20 from Mycoplasma mobile (strain ATCC 43663 / 163K / NCTC 11711) (Mesomycoplasma mobile).